The primary structure comprises 590 residues: Aspartate--tRNA(Asp/Asn) ligase (590 aa).

Glutamate 170 serves as a coordination point for L-aspartate. Residues glutamine 194–lysine 197 form an aspartate region. Arginine 216 contacts L-aspartate. ATP contacts are provided by residues arginine 216 to glutamate 218 and glutamine 225. Histidine 448 is an L-aspartate binding site. Glutamate 482 lines the ATP pocket. Arginine 489 serves as a coordination point for L-aspartate. Glycine 534–arginine 537 is a binding site for ATP. Residues serine 557 to glutamate 590 are disordered. Residues glutamine 575 to glutamate 590 are compositionally biased toward basic and acidic residues.

This sequence belongs to the class-II aminoacyl-tRNA synthetase family. Type 1 subfamily. Homodimer.

Its subcellular location is the cytoplasm. It carries out the reaction tRNA(Asx) + L-aspartate + ATP = L-aspartyl-tRNA(Asx) + AMP + diphosphate. Functionally, aspartyl-tRNA synthetase with relaxed tRNA specificity since it is able to aspartylate not only its cognate tRNA(Asp) but also tRNA(Asn). Reaction proceeds in two steps: L-aspartate is first activated by ATP to form Asp-AMP and then transferred to the acceptor end of tRNA(Asp/Asn). The protein is Aspartate--tRNA(Asp/Asn) ligase of Mycobacterium sp. (strain JLS).